The chain runs to 52 residues: Lantibiotic gallidermin (52 aa).

A propeptide spanning residues 1–30 is cleaved from the precursor; it reads MEAVKEKNELFDLDVKVNAKESNDSGAEPR. The lanthionine (Ser-Cys) cross-link spans 33 to 37; sequence SKFLC. The beta-methyllanthionine (Thr-Cys) cross-link spans 38 to 41; sequence TPGC. Residue T44 is modified to (Z)-2,3-didehydrobutyrine. Residues 46 to 51 constitute a cross-link (lanthionine (Ser-Cys)); sequence SFNSYC. The S-(2-aminovinyl)-D-cysteine (Ser-Cys) cross-link spans 49–52; sequence SYCC.

The protein belongs to the type A lantibiotic family. In terms of processing, maturation of lantibiotics involves the enzymatic conversion of Thr, and Ser into dehydrated AA and the formation of thioether bonds with cysteine. The C-terminal lanthionine undergoes decarboxylation. This is followed by membrane translocation and cleavage of the modified precursor. Post-translationally, the structure of the 2,3-didehydrobutyrine is not discussed in PubMed:1932575. However, in Fig. 5 the NMR model appears to have the Z-isomer.

Its function is as follows. Lanthionine-containing peptide antibiotic (lantibiotic) active on Gram-positive bacteria. The bactericidal activity of lantibiotics is based on depolarization of energized bacterial cytoplasmic membranes, initiated by the formation of aqueous transmembrane pores. The protein is Lantibiotic gallidermin (gdmA) of Staphylococcus gallinarum.